The sequence spans 648 residues: MYKKVVGGWFVYLVSTQISSGRAGSARFGGHLGYPSPSVAYIMARASRKANGSKAKSNSVQEYLDLISLQKQQFDQMRANYSHQNTQLAKSNSMLMIKITDLETKISELVQENVQLRSRLSVTELRFKERLNQSFNLLEHGAFQRFDEIVNLFAVVRAQQGLRPESAAATEQAQRRFKGLEQRGVSPKVVGFDVPSSDSVRGERETLDDRAQQHQEADSMELNVEETQPLRKKRRRSSRRESLFIPSDFDFSNDSLENALKEADKSRSAKDEAPSVAEDTITEEKHRESASRTTEQGESESRTKEASGTLTQSNEDGMGNDKSLQKEGTQQEDAANFTHSIIEYFIPEEYDVGSSDVANTSKSKLEVYRDDNEIESSQSTSSGECKELTGELSSAQPPFVQIPASSQSKIKHSLKPPRTSQRKIVVDEVMPHNDYSDATRPRRTRGKAVDYKWPSLRAKMRRPTDKLVDATTVTDIHELQVPTNRKLRKQREGVADSADVHGETDHEQDPEQSPAAEDVSVGLQSINSNIQKDEVSDQPLQATEVTQALPEDLPLRQPMALKDITNKIHIVQKPKKSLAKKPIIGDVSDENSYYGDDTSASGLRLNEGDLSVFDLIGGVKCSNIPKTHRARAKAERQVGKKPAFKVST.

Coiled coils occupy residues 95–122 (LMIK…RLSV) and 208–273 (DDRA…KDEA). 5 disordered regions span residues 188-239 (KVVG…RSSR), 262-334 (EADK…QEDA), 367-443 (VYRD…RPRR), 483-518 (TNRK…AAED), and 628-648 (HRAR…KVST). Composition is skewed to basic and acidic residues over residues 200-217 (VRGE…HQEA) and 262-273 (EADKSRSAKDEA). Residues 306–315 (ASGTLTQSNE) are compositionally biased toward polar residues. 2 stretches are compositionally biased toward basic and acidic residues: residues 424 to 440 (IVVD…DATR) and 490 to 509 (QREG…HEQD).

Belongs to the shugoshin family.

Its subcellular location is the nucleus. It localises to the chromosome. It is found in the centromere. In terms of biological role, plays a central role in chromosome cohesion during cell division by preventing premature dissociation of cohesin complex from centromeres after prophase, when most of cohesin complex dissociates from chromosomes arms. May act by protecting RAD21 and or REC8 from cleavage by ESP1/separase. The protein is Shugoshin (SGO1) of Eremothecium gossypii (strain ATCC 10895 / CBS 109.51 / FGSC 9923 / NRRL Y-1056) (Yeast).